The following is a 328-amino-acid chain: DNA-directed RNA polymerase subunit alpha (328 aa).

An alpha N-terminal domain (alpha-NTD) region spans residues 1-232 (MSTQGFLKPR…DQISVFAALE (232 aa)). Positions 248-328 (IDPVLLRPVD…NWPPLGLERP (81 aa)) are alpha C-terminal domain (alpha-CTD).

The protein belongs to the RNA polymerase alpha chain family. Homodimer. The RNAP catalytic core consists of 2 alpha, 1 beta, 1 beta' and 1 omega subunit. When a sigma factor is associated with the core the holoenzyme is formed, which can initiate transcription.

The enzyme catalyses RNA(n) + a ribonucleoside 5'-triphosphate = RNA(n+1) + diphosphate. Functionally, DNA-dependent RNA polymerase catalyzes the transcription of DNA into RNA using the four ribonucleoside triphosphates as substrates. This Bordetella avium (strain 197N) protein is DNA-directed RNA polymerase subunit alpha.